The primary structure comprises 165 residues: Nicotine 6-hydroxylase small subunit (165 aa).

The 2Fe-2S ferredoxin-type domain maps to 10–86 (VEIDVEVNGR…GRSIRTVEDL (77 aa)). [2Fe-2S] cluster is bound by residues Cys48, Cys53, Cys56, and Cys68.

As to quaternary structure, heterotrimer composed of a large subunit (NdhL), a medium subunit (NdhM) and a small subunit (NdhS). Requires [2Fe-2S] cluster as cofactor.

It is found in the cytoplasm. It carries out the reaction (R)-nicotine + A + H2O = (R)-6-hydroxynicotine + AH2. It catalyses the reaction (S)-nicotine + A + H2O = (S)-6-hydroxynicotine + AH2. It functions in the pathway alkaloid degradation; nicotine degradation; 6-hydroxypseudooxynicotine from nicotine (R-isomer route): step 1/2. It participates in alkaloid degradation; nicotine degradation; 6-hydroxypseudooxynicotine from nicotine (S-isomer route): step 1/2. With respect to regulation, nicotine dehydrogenase activity is inhibited by tungsten. In terms of biological role, component of the nicotine 6-hydroxylase, which is involved in the degradation of nicotine. Catalyzes the hydroxylation of the pyridine ring at C6 to form 6-hydroxynicotine. Can use both L-nicotine and D-nicotine. This Paenarthrobacter nicotinovorans (Arthrobacter nicotinovorans) protein is Nicotine 6-hydroxylase small subunit.